A 109-amino-acid chain; its full sequence is Spermidine export protein MdtI (109 aa).

4 helical membrane-spanning segments follow: residues 6–26, 36–56, 64–84, and 88–108; these read WVHA…NVFL, IFGL…SQAV, AYAL…WILF, and LNRK…MVKL.

The protein belongs to the drug/metabolite transporter (DMT) superfamily. Small multidrug resistance (SMR) (TC 2.A.7.1) family. MdtI subfamily. As to quaternary structure, forms a complex with MdtJ.

It localises to the cell inner membrane. Catalyzes the excretion of spermidine. The chain is Spermidine export protein MdtI from Escherichia coli O81 (strain ED1a).